We begin with the raw amino-acid sequence, 98 residues long: uncharacterized protein (98 aa).

It belongs to the YciI family. In terms of assembly, homodimer.

This is an uncharacterized protein from Haemophilus influenzae (strain ATCC 51907 / DSM 11121 / KW20 / Rd).